Reading from the N-terminus, the 430-residue chain is Putative cytochrome P450 139 (430 aa).

Cys372 contributes to the heme binding site.

The protein belongs to the cytochrome P450 family. The cofactor is heme.

This Mycobacterium bovis (strain ATCC BAA-935 / AF2122/97) protein is Putative cytochrome P450 139 (cyp139).